The following is a 282-amino-acid chain: Bis(5'-nucleosyl)-tetraphosphatase, symmetrical (282 aa).

This sequence belongs to the Ap4A hydrolase family.

It carries out the reaction P(1),P(4)-bis(5'-adenosyl) tetraphosphate + H2O = 2 ADP + 2 H(+). Hydrolyzes diadenosine 5',5'''-P1,P4-tetraphosphate to yield ADP. In Paraburkholderia phymatum (strain DSM 17167 / CIP 108236 / LMG 21445 / STM815) (Burkholderia phymatum), this protein is Bis(5'-nucleosyl)-tetraphosphatase, symmetrical.